The primary structure comprises 232 residues: Large ribosomal subunit protein uL1 (232 aa).

The protein belongs to the universal ribosomal protein uL1 family. As to quaternary structure, part of the 50S ribosomal subunit.

Binds directly to 23S rRNA. The L1 stalk is quite mobile in the ribosome, and is involved in E site tRNA release. Its function is as follows. Protein L1 is also a translational repressor protein, it controls the translation of the L11 operon by binding to its mRNA. This is Large ribosomal subunit protein uL1 from Alkaliphilus oremlandii (strain OhILAs) (Clostridium oremlandii (strain OhILAs)).